The chain runs to 331 residues: ESX-3 secretion system protein EccE3 (331 aa).

2 helical membrane passes run 11–31 and 37–57; these read GRVTLVLLAVVPVALAYPWQS and LLGVAAAVVIGLFGFWRGLYF.

Belongs to the EccE family. Part of the ESX-3 / type VII secretion system (T7SS), which is composed of cytosolic and membrane components. The ESX-3 membrane complex is composed of EccB3, EccC3, EccD3 and EccE3.

It localises to the cell inner membrane. Part of the ESX-3 specialized secretion system, which is important for iron and zinc uptake or homeostasis. The polypeptide is ESX-3 secretion system protein EccE3 (Mycobacterium tuberculosis (strain CDC 1551 / Oshkosh)).